Consider the following 202-residue polypeptide: Adenylyl-sulfate kinase (202 aa).

35 to 42 (GLSGSGKS) serves as a coordination point for ATP. The active-site Phosphoserine intermediate is the Ser-109.

Belongs to the APS kinase family.

The catalysed reaction is adenosine 5'-phosphosulfate + ATP = 3'-phosphoadenylyl sulfate + ADP + H(+). The protein operates within sulfur metabolism; hydrogen sulfide biosynthesis; sulfite from sulfate: step 2/3. Catalyzes the synthesis of activated sulfate. The protein is Adenylyl-sulfate kinase of Bacteroides fragilis (strain YCH46).